The primary structure comprises 257 residues: S-methyl-5'-thioadenosine phosphorylase (257 aa).

Residues S10 and 50-51 (RH) each bind phosphate. C130 and C195 are joined by a disulfide. Substrate is bound at residue M180. Position 181 (T181) interacts with phosphate. A substrate-binding site is contributed by 204–206 (DYD). C246 and C248 form a disulfide bridge.

This sequence belongs to the PNP/MTAP phosphorylase family. MTAP subfamily. In terms of assembly, homohexamer. Dimer of a homotrimer.

The catalysed reaction is S-methyl-5'-thioadenosine + phosphate = 5-(methylsulfanyl)-alpha-D-ribose 1-phosphate + adenine. It functions in the pathway amino-acid biosynthesis; L-methionine biosynthesis via salvage pathway; S-methyl-5-thio-alpha-D-ribose 1-phosphate from S-methyl-5'-thioadenosine (phosphorylase route): step 1/1. Catalyzes the reversible phosphorylation of S-methyl-5'-thioadenosine (MTA) to adenine and 5-methylthioribose-1-phosphate. Involved in the breakdown of MTA, a major by-product of polyamine biosynthesis. Responsible for the first step in the methionine salvage pathway after MTA has been generated from S-adenosylmethionine. Has broad substrate specificity with 6-aminopurine nucleosides as preferred substrates. The chain is S-methyl-5'-thioadenosine phosphorylase from Pyrococcus furiosus (strain ATCC 43587 / DSM 3638 / JCM 8422 / Vc1).